Reading from the N-terminus, the 130-residue chain is Glycine cleavage system H protein (130 aa).

Residues 25 to 106 (MALIGISDFA…PFDSWMIKVK (82 aa)) enclose the Lipoyl-binding domain. The residue at position 66 (lysine 66) is an N6-lipoyllysine.

This sequence belongs to the GcvH family. As to quaternary structure, the glycine cleavage system is composed of four proteins: P, T, L and H. The cofactor is (R)-lipoate.

Functionally, the glycine cleavage system catalyzes the degradation of glycine. The H protein shuttles the methylamine group of glycine from the P protein to the T protein. This is Glycine cleavage system H protein from Leptospira interrogans serogroup Icterohaemorrhagiae serovar copenhageni (strain Fiocruz L1-130).